The chain runs to 1315 residues: Chaoptin (1315 aa).

The N-terminal stretch at 1 to 29 is a signal peptide; the sequence is MGLEFFFKFGYAFLTITLMIMIWMSLARA. Asn-77 carries an N-linked (GlcNAc...) (high mannose) asparagine; alternate glycan. Asn-77 carries N-linked (GlcNAc...) (paucimannose) asparagine; alternate glycosylation. LRR repeat units lie at residues 80-101, 103-124, 128-149, 152-173, 177-198, 201-222, 226-247, 250-271, and 279-300; these read KVFM…FLQS, GMYR…AFTG, SLWE…SLRH, KLRH…SFRG, SLQT…SFSG, ILET…VFVD, RLTR…ALGP, SLRT…ETYE, and NLDN…SFKY. Asn-267 carries an N-linked (GlcNAc...) (paucimannose) asparagine; alternate glycan. An N-linked (GlcNAc...) (complex) asparagine; alternate glycan is attached at Asn-267. Asn-305 carries an N-linked (GlcNAc...) (high mannose) asparagine; alternate glycan. The N-linked (GlcNAc...) (paucimannose) asparagine; alternate glycan is linked to Asn-305. LRR repeat units follow at residues 326 to 347, 351 to 372, 375 to 396, 401 to 424, 477 to 498, 527 to 548, 551 to 572, 577 to 598, 601 to 622, 625 to 646, 649 to 670, 676 to 696, 708 to 729, 733 to 754, 757 to 778, 781 to 802, 805 to 826, 828 to 849, 854 to 875, 879 to 900, 903 to 924, 928 to 948, 949 to 970, 973 to 994, 996 to 1017, 1021 to 1044, and 1045 to 1066; these read RIRE…AFDS, SLQI…LFNN, VLRV…ETFN, TLLK…RNMT, GLKR…AFHE, SLQE…SFHF, NLRL…TFQG, KLEE…TFFD, ALRK…AFMN, ELEY…SFQN, KLEI…YFDQ, NLNV…SSWS, NIKI…YFRP, SLTH…VFGN, HLQW…AFKN, QLQL…IFKP, GLRI…LFYN, GMEK…SLSS, TLCE…DLSN, SLRY…VFAT, KLAV…SFMG, SLIK…IRLK, YLRE…LAHN, NLRM…TQAL, HLRR…SFDG, DLEM…DSLP, and HLRS…PHLL. A glycan (N-linked (GlcNAc...) (high mannose) asparagine) is linked at Asn-361. Asn-422 is a glycosylation site (N-linked (GlcNAc...) asparagine). A glycan (N-linked (GlcNAc...) (high mannose) asparagine) is linked at Asn-680. Asn-692 carries N-linked (GlcNAc...) (high mannose) asparagine; alternate glycosylation. N-linked (GlcNAc...) (paucimannose) asparagine; alternate glycosylation occurs at Asn-692. Asn-718 carries an N-linked (GlcNAc...) (high mannose) asparagine glycan. Residue Asn-746 is glycosylated (N-linked (GlcNAc...) asparagine). Asn-936 carries N-linked (GlcNAc...) (high mannose) asparagine glycosylation. An N-linked (GlcNAc...) (paucimannose) asparagine glycan is attached at Asn-970. A glycan (N-linked (GlcNAc...) (complex) asparagine) is linked at Asn-1012. Asn-1122, Asn-1152, and Asn-1171 each carry an N-linked (GlcNAc...) (high mannose) asparagine glycan. In terms of domain architecture, LRRCT spans 1211 to 1274; sequence TDLNCDCDLG…DDLRETRCEN (64 aa).

Belongs to the chaoptin family. In terms of tissue distribution, expressed in photoreceptor cells and their axons in the adult retina, the ocellus and larval photoreceptor organ.

The protein localises to the cell membrane. Required for photoreceptor cell morphogenesis. Mediates homophilic cellular adhesion. The protein is Chaoptin (chp) of Drosophila melanogaster (Fruit fly).